Here is a 238-residue protein sequence, read N- to C-terminus: 7-cyano-7-deazaguanine synthase 1 (238 aa).

14–24 (FSGGQDSATCL) contributes to the ATP binding site. Zn(2+) contacts are provided by C202, C217, C220, and C223.

The protein belongs to the QueC family. Zn(2+) is required as a cofactor.

It carries out the reaction 7-carboxy-7-deazaguanine + NH4(+) + ATP = 7-cyano-7-deazaguanine + ADP + phosphate + H2O + H(+). The protein operates within purine metabolism; 7-cyano-7-deazaguanine biosynthesis. Functionally, catalyzes the ATP-dependent conversion of 7-carboxy-7-deazaguanine (CDG) to 7-cyano-7-deazaguanine (preQ(0)). This chain is 7-cyano-7-deazaguanine synthase 1, found in Rhodopseudomonas palustris (strain HaA2).